Here is a 1161-residue protein sequence, read N- to C-terminus: Mitogen-activated protein kinase kinase kinase (1161 aa).

The region spanning 56 to 120 (GDGSLWTALY…PKDFVTDEDP (65 aa)) is the SH3 domain. In terms of domain architecture, Protein kinase spans 142–402 (LDIKEVIGSG…KEILKQLESI (261 aa)). Residues 148-156 (IGSGGFCKV) and lysine 169 each bind ATP. Catalysis depends on aspartate 264, which acts as the Proton acceptor. Residue threonine 300 is modified to Phosphothreonine; by autocatalysis. Serine 304 carries the phosphoserine; by autocatalysis modification. Leucine-zipper stretches follow at residues 426–447 (IAGV…EEQL) and 461–482 (LKIR…ELVM). Phosphoserine is present on residues serine 525 and serine 560. Disordered regions lie at residues 560-615 (SQLS…GSGG) and 658-678 (TTNN…NQLN). Polar residues predominate over residues 571 to 583 (AQTSTHSSFSKSA). Low complexity predominate over residues 591–601 (QQQNQQQVASL). 3 positions are modified to phosphoserine: serine 685, serine 773, and serine 792. The interval 790–830 (GNSPAVGRKKHSLDSSSHHPPANGSNSFALPNQLTLPSEDN) is disordered. The segment covering 812 to 830 (NGSNSFALPNQLTLPSEDN) has biased composition (polar residues). Residue threonine 862 is modified to Phosphothreonine. Disordered regions lie at residues 988–1014 (RSAS…EAVN), 1045–1093 (EQRQ…SAGS), and 1137–1161 (GGSS…LERC). Positions 989–1010 (SASPSLSSSSTTASASPSIAST) are enriched in low complexity. Serine 993 bears the Phosphoserine mark. A compositionally biased stretch (basic residues) spans 1052–1063 (NQKKQRPKHITK). Residues 1073–1086 (GQHHEHDDHNDPQH) are compositionally biased toward basic and acidic residues. Positions 1150–1161 (PQTQSCEQLERC) are enriched in polar residues.

The protein belongs to the protein kinase superfamily. STE Ser/Thr protein kinase family. MAP kinase kinase kinase subfamily. In terms of assembly, homodimer. It depends on Mg(2+) as a cofactor. Post-translationally, autophosphorylation on serine and threonine residues within the activation loop plays a role in enzyme activation. In terms of tissue distribution, expressed both maternally and zygotically. Expressed uniformly in large quantities in the early embryo (stages 1-4). In the late embryo, expression is ubiquitous, but expression levels are dramatically reduced. Expressed in the adult head and thorax, and in S2 cells.

The catalysed reaction is L-seryl-[protein] + ATP = O-phospho-L-seryl-[protein] + ADP + H(+). It catalyses the reaction L-threonyl-[protein] + ATP = O-phospho-L-threonyl-[protein] + ADP + H(+). Its activity is regulated as follows. Homodimerization via the leucine zipper domains is required for autophosphorylation and subsequent activation. Activated by C6-ceramide. Its function is as follows. Activates the JUN N-terminal pathway during dorsal closure. The sequence is that of Mitogen-activated protein kinase kinase kinase from Drosophila melanogaster (Fruit fly).